Consider the following 550-residue polypeptide: Hydroxylamine reductase (550 aa).

[2Fe-2S] cluster-binding residues include C3, C6, C18, and C25. The hybrid [4Fe-2O-2S] cluster site is built by H249, E273, C317, C405, C433, C458, E492, and K494. The residue at position 405 (C405) is a Cysteine persulfide.

This sequence belongs to the HCP family. The cofactor is [2Fe-2S] cluster. Requires hybrid [4Fe-2O-2S] cluster as cofactor.

It is found in the cytoplasm. It catalyses the reaction A + NH4(+) + H2O = hydroxylamine + AH2 + H(+). Catalyzes the reduction of hydroxylamine to form NH(3) and H(2)O. This chain is Hydroxylamine reductase, found in Salmonella typhi.